The primary structure comprises 269 residues: uncharacterized protein (269 aa).

It belongs to the methyltransferase superfamily.

This is an uncharacterized protein from Mycobacterium leprae (strain Br4923).